Reading from the N-terminus, the 158-residue chain is Cytosine deaminase (158 aa).

Positions lysine 9–valine 129 constitute a CMP/dCMP-type deaminase domain. Asparagine 51 provides a ligand contact to substrate. A Zn(2+)-binding site is contributed by histidine 62. Glutamate 64 acts as the Proton donor in catalysis. Cysteine 91 and cysteine 94 together coordinate Zn(2+). Residue aspartate 155 participates in substrate binding.

This sequence belongs to the cytidine and deoxycytidylate deaminase family. As to quaternary structure, homodimer. Requires Zn(2+) as cofactor.

It localises to the cytoplasm. It is found in the nucleus. The enzyme catalyses cytosine + H2O + H(+) = uracil + NH4(+). Its pathway is pyrimidine metabolism; UMP biosynthesis via salvage pathway; uracil from cytosine: step 1/1. In terms of biological role, catalyzes the hydrolytic deamination of cytosine to uracil or 5-methylcytosine to thymine. Is involved in the pyrimidine salvage pathway, which allows the cell to utilize cytosine for pyrimidine nucleotide synthesis. The protein is Cytosine deaminase of Saccharomyces cerevisiae (strain ATCC 204508 / S288c) (Baker's yeast).